A 438-amino-acid chain; its full sequence is Glutamate-1-semialdehyde 2,1-aminomutase (438 aa).

N6-(pyridoxal phosphate)lysine is present on Lys-277.

Belongs to the class-III pyridoxal-phosphate-dependent aminotransferase family. HemL subfamily. In terms of assembly, homodimer. The cofactor is pyridoxal 5'-phosphate.

The protein localises to the cytoplasm. The catalysed reaction is (S)-4-amino-5-oxopentanoate = 5-aminolevulinate. It functions in the pathway porphyrin-containing compound metabolism; protoporphyrin-IX biosynthesis; 5-aminolevulinate from L-glutamyl-tRNA(Glu): step 2/2. Its pathway is porphyrin-containing compound metabolism; chlorophyll biosynthesis. The chain is Glutamate-1-semialdehyde 2,1-aminomutase from Synechococcus sp. (strain CC9311).